The sequence spans 429 residues: Adenylosuccinate synthetase (429 aa).

GTP contacts are provided by residues Gly12–Lys18 and Gly40–Thr42. The active-site Proton acceptor is the Asp13. The Mg(2+) site is built by Asp13 and Gly40. Residues Asp13–Lys16, Asn38–His41, Thr129, Arg143, Gln223, Thr238, and Arg302 each bind IMP. Residue His41 is the Proton donor of the active site. Thr298–Arg304 provides a ligand contact to substrate. Residues Arg304, Lys330–Asp332, and Ser412–Ser414 contribute to the GTP site.

It belongs to the adenylosuccinate synthetase family. Homodimer. Requires Mg(2+) as cofactor.

The protein localises to the cytoplasm. The catalysed reaction is IMP + L-aspartate + GTP = N(6)-(1,2-dicarboxyethyl)-AMP + GDP + phosphate + 2 H(+). It functions in the pathway purine metabolism; AMP biosynthesis via de novo pathway; AMP from IMP: step 1/2. In terms of biological role, plays an important role in the de novo pathway of purine nucleotide biosynthesis. Catalyzes the first committed step in the biosynthesis of AMP from IMP. This Granulibacter bethesdensis (strain ATCC BAA-1260 / CGDNIH1) protein is Adenylosuccinate synthetase.